Here is a 317-residue protein sequence, read N- to C-terminus: Homoserine O-acetyltransferase (317 aa).

Catalysis depends on cysteine 142, which acts as the Acyl-thioester intermediate. Substrate contacts are provided by lysine 163 and serine 192. The active-site Proton acceptor is the histidine 235. Glutamate 237 is a catalytic residue. Residue arginine 249 coordinates substrate.

Belongs to the MetA family.

It localises to the cytoplasm. The enzyme catalyses L-homoserine + acetyl-CoA = O-acetyl-L-homoserine + CoA. It participates in amino-acid biosynthesis; L-methionine biosynthesis via de novo pathway; O-acetyl-L-homoserine from L-homoserine: step 1/1. In terms of biological role, transfers an acetyl group from acetyl-CoA to L-homoserine, forming acetyl-L-homoserine. The polypeptide is Homoserine O-acetyltransferase (Rhizorhabdus wittichii (strain DSM 6014 / CCUG 31198 / JCM 15750 / NBRC 105917 / EY 4224 / RW1) (Sphingomonas wittichii)).